A 148-amino-acid chain; its full sequence is MKVVIQRVSQAQVAIEEQIVGQIKQGFMVLVGIHQEDTPEDVAYVVGKISKLRVFEDDEGKMNRSIQEIEGSILSISQFTLYAKTKKGNRPSFIEAARPDVAIPLYELFNQQLEAEGIAVATGEFGADMQVSLTNDGPVTIVIDTREK.

A Gly-cisPro motif, important for rejection of L-amino acids motif is present at residues 137-138; the sequence is GP.

Belongs to the DTD family. Homodimer.

It localises to the cytoplasm. The catalysed reaction is glycyl-tRNA(Ala) + H2O = tRNA(Ala) + glycine + H(+). It catalyses the reaction a D-aminoacyl-tRNA + H2O = a tRNA + a D-alpha-amino acid + H(+). In terms of biological role, an aminoacyl-tRNA editing enzyme that deacylates mischarged D-aminoacyl-tRNAs. Also deacylates mischarged glycyl-tRNA(Ala), protecting cells against glycine mischarging by AlaRS. Acts via tRNA-based rather than protein-based catalysis; rejects L-amino acids rather than detecting D-amino acids in the active site. By recycling D-aminoacyl-tRNA to D-amino acids and free tRNA molecules, this enzyme counteracts the toxicity associated with the formation of D-aminoacyl-tRNA entities in vivo and helps enforce protein L-homochirality. This Enterococcus faecalis (strain ATCC 700802 / V583) protein is D-aminoacyl-tRNA deacylase.